The sequence spans 483 residues: UDP-N-acetylmuramate--L-alanine ligase (483 aa).

Residue 112–118 coordinates ATP; it reads GTHGKTT.

It belongs to the MurCDEF family.

The protein resides in the cytoplasm. It carries out the reaction UDP-N-acetyl-alpha-D-muramate + L-alanine + ATP = UDP-N-acetyl-alpha-D-muramoyl-L-alanine + ADP + phosphate + H(+). It functions in the pathway cell wall biogenesis; peptidoglycan biosynthesis. Its function is as follows. Cell wall formation. The polypeptide is UDP-N-acetylmuramate--L-alanine ligase (Ralstonia pickettii (strain 12J)).